A 405-amino-acid chain; its full sequence is Cystathionine gamma-lyase (405 aa).

Substrate-binding residues include R62, Y114, and R119. At K212 the chain carries N6-(pyridoxal phosphate)lysine. E339 contributes to the substrate binding site.

The protein belongs to the trans-sulfuration enzymes family. Homotetramer. Interacts with CALM in a calcium-dependent manner. The cofactor is pyridoxal 5'-phosphate. Highly expressed in liver. Also in muscle and lower expression in most tissues except heart, pituitary gland, spleen, thymus, and vascular tissue, where it is hardly detected.

Its subcellular location is the cytoplasm. The catalysed reaction is L,L-cystathionine + H2O = 2-oxobutanoate + L-cysteine + NH4(+). The enzyme catalyses L-cysteine + H2O = hydrogen sulfide + pyruvate + NH4(+) + H(+). It carries out the reaction L-homocysteine + H2O = 2-oxobutanoate + hydrogen sulfide + NH4(+) + H(+). It catalyses the reaction L-homoserine = 2-oxobutanoate + NH4(+). The catalysed reaction is L-selenocystathionine + H2O = L-selenocysteine + 2-oxobutanoate + NH4(+). It participates in amino-acid biosynthesis; L-cysteine biosynthesis; L-cysteine from L-homocysteine and L-serine: step 2/2. Its activity is regulated as follows. Inhibited by propargylglycine, trifluoroalanine and aminoethoxyvinylglycine. Catalyzes the last step in the trans-sulfuration pathway from L-methionine to L-cysteine in a pyridoxal-5'-phosphate (PLP)-dependent manner, which consists on cleaving the L,L-cystathionine molecule into L-cysteine, ammonia and 2-oxobutanoate. Part of the L-cysteine derived from the trans-sulfuration pathway is utilized for biosynthesis of the ubiquitous antioxidant glutathione. Besides its role in the conversion of L-cystathionine into L-cysteine, it utilizes L-cysteine and L-homocysteine as substrates (at much lower rates than L,L-cystathionine) to produce the endogenous gaseous signaling molecule hydrogen sulfide (H2S). In vitro, it converts two L-cysteine molecules into lanthionine and H2S, also two L-homocysteine molecules to homolanthionine and H2S, which can be particularly relevant under conditions of severe hyperhomocysteinemia (which is a risk factor for cardiovascular disease, diabetes, and Alzheimer's disease). Lanthionine and homolanthionine are structural homologs of L,L-cystathionine that differ by the absence or presence of an extra methylene group, respectively. Acts as a cysteine-protein sulfhydrase by mediating sulfhydration of target proteins: sulfhydration consists of converting -SH groups into -SSH on specific cysteine residues of target proteins such as GAPDH, PTPN1 and NF-kappa-B subunit RELA, thereby regulating their function. By generating the gasotransmitter H2S, it participates in a number of physiological processes such as vasodilation, bone protection, and inflammation. Plays an essential role in myogenesis by contributing to the biogenesis of H2S in skeletal muscle tissue. Can also accept homoserine as substrate. Catalyzes the elimination of selenocystathionine (which can be derived from the diet) to yield selenocysteine, ammonia and 2-oxobutanoate. This chain is Cystathionine gamma-lyase (CTH), found in Homo sapiens (Human).